The chain runs to 356 residues: Protein disulfide isomerase crld-1 (356 aa).

The first 17 residues, 1–17, serve as a signal peptide directing secretion; it reads MSRILLLLAVLIGATSQ. The Lumenal portion of the chain corresponds to 18-299; the sequence is KEVTIKNEKC…DRPFMPIDQQ (282 aa). The CXXC signature appears at 27 to 30; the sequence is CRTC. Residues cysteine 27 and cysteine 30 are joined by a disulfide bond. Asparagine 122 carries N-linked (GlcNAc...) asparagine glycosylation. The 39-residue stretch at 150-188 folds into the EGF-like 1 domain; sequence GLSEKADVCFGKGSCHGDGSREGSGKCKCETGYTGNLCR. Cystine bridges form between cysteine 158–cysteine 176, cysteine 178–cysteine 187, cysteine 245–cysteine 258, cysteine 251–cysteine 267, and cysteine 269–cysteine 281. An EGF-like 2; calcium-binding domain is found at 241 to 282; sequence DVNECQNESACTKEHEICVNTVGSFKCECKEGYKKDDEQNCQ. Asparagine 247 is a glycosylation site (N-linked (GlcNAc...) asparagine). A helical transmembrane segment spans residues 300–317; it reads LKLIAFSSLIIIITFVVW. Topologically, residues 318-321 are cytoplasmic; the sequence is HGSP. A helical transmembrane segment spans residues 322 to 341; that stretch reads VLYVLTGITIVALILVDLYV. At 342–356 the chain is on the lumenal side; that stretch reads NPDTIPDEAKRFLGY.

This sequence belongs to the CRELD family. In terms of assembly, interacts with unc-29. In terms of tissue distribution, isoforms a: Widely expressed in tissues including body wall muscles, neurons, pharynx, hypodermis, seam cells, intestine and gonad. Isoform b: Widely expressed in tissues including body wall muscles, neurons, pharynx, hypodermis, seam cells, intestine and gonad.

The protein resides in the endoplasmic reticulum membrane. Its subcellular location is the endoplasmic reticulum lumen. It carries out the reaction Catalyzes the rearrangement of -S-S- bonds in proteins.. Functionally, protein disulfide isomerase which associates with the unc-29 subunit of levamisole-sensitive nicotinic acetylcholine receptors (L-nAChR) to promote L-nAChR assembly in the endoplasmic reticulum at neuromuscular junctions. Its function is as follows. Promotes L-nAChR assembly in the endoplasmic reticulum at neuromuscular junctions. The protein is Protein disulfide isomerase crld-1 of Caenorhabditis elegans.